The following is a 1151-amino-acid chain: Nardilysin (1151 aa).

Positions 1–20 (MLRRVTVAAVCATRRKLCEA) are cleaved as a signal peptide. 2 disordered regions span residues 53–108 (RNKA…KSPS) and 133–207 (MEGK…KKTT). Phosphoserine occurs at positions 86, 94, and 96. Positions 141-198 (TDDEEEEEVEEEEEDDDEDSGAEIEDDDEEGFDDEDEFDDEHDDDLDTEDNELEELEE) are enriched in acidic residues. Zn(2+) is bound at residue His-233. Residue Glu-236 is the Proton acceptor of the active site. Zn(2+) contacts are provided by His-237 and Glu-314.

It belongs to the peptidase M16 family. Interacts with BACE1 and NRG1. Zn(2+) is required as a cofactor. As to expression, primarily in adult heart, skeletal muscle, and testis and at much lower levels in other tissues.

The protein localises to the mitochondrion. It localises to the cell projection. Its subcellular location is the dendrite. The catalysed reaction is Hydrolysis of polypeptides, preferably at -Xaa-|-Arg-Lys-, and less commonly at -Arg-|-Arg-Xaa-, in which Xaa is not Arg or Lys.. Functionally, cleaves peptide substrates on the N-terminus of arginine residues in dibasic pairs. Is a critical activator of BACE1- and ADAM17-mediated pro-neuregulin ectodomain shedding, involved in the positive regulation of axonal maturation and myelination. Required for proper functioning of 2-oxoglutarate dehydrogenase (OGDH). This Homo sapiens (Human) protein is Nardilysin.